A 288-amino-acid polypeptide reads, in one-letter code: Pyridoxal kinase PdxY (288 aa).

Substrate-binding positions include serine 12 and 47 to 48; that span reads TQ. Residues aspartate 114, glutamate 151, lysine 184, and 211–214 each bind ATP; that span reads RPLL. Aspartate 225 lines the substrate pocket.

This sequence belongs to the pyridoxine kinase family. PdxY subfamily. Homodimer. It depends on Mg(2+) as a cofactor.

It catalyses the reaction pyridoxal + ATP = pyridoxal 5'-phosphate + ADP + H(+). It functions in the pathway cofactor metabolism; pyridoxal 5'-phosphate salvage; pyridoxal 5'-phosphate from pyridoxal: step 1/1. In terms of biological role, pyridoxal kinase involved in the salvage pathway of pyridoxal 5'-phosphate (PLP). Catalyzes the phosphorylation of pyridoxal to PLP. The polypeptide is Pyridoxal kinase PdxY (Pseudomonas aeruginosa (strain UCBPP-PA14)).